Here is a 223-residue protein sequence, read N- to C-terminus: Thiamine-phosphate synthase (223 aa).

Residues Gln45 to Lys49 and Asn77 contribute to the 4-amino-2-methyl-5-(diphosphooxymethyl)pyrimidine site. 2 residues coordinate Mg(2+): Asp78 and Asp97. Thr116 provides a ligand contact to 4-amino-2-methyl-5-(diphosphooxymethyl)pyrimidine. Ser142 to Thr144 is a binding site for 2-[(2R,5Z)-2-carboxy-4-methylthiazol-5(2H)-ylidene]ethyl phosphate. 4-amino-2-methyl-5-(diphosphooxymethyl)pyrimidine is bound at residue Lys145. 2-[(2R,5Z)-2-carboxy-4-methylthiazol-5(2H)-ylidene]ethyl phosphate is bound by residues Gly173 and Val193–Thr194.

Belongs to the thiamine-phosphate synthase family. Mg(2+) serves as cofactor.

The catalysed reaction is 2-[(2R,5Z)-2-carboxy-4-methylthiazol-5(2H)-ylidene]ethyl phosphate + 4-amino-2-methyl-5-(diphosphooxymethyl)pyrimidine + 2 H(+) = thiamine phosphate + CO2 + diphosphate. It carries out the reaction 2-(2-carboxy-4-methylthiazol-5-yl)ethyl phosphate + 4-amino-2-methyl-5-(diphosphooxymethyl)pyrimidine + 2 H(+) = thiamine phosphate + CO2 + diphosphate. It catalyses the reaction 4-methyl-5-(2-phosphooxyethyl)-thiazole + 4-amino-2-methyl-5-(diphosphooxymethyl)pyrimidine + H(+) = thiamine phosphate + diphosphate. It functions in the pathway cofactor biosynthesis; thiamine diphosphate biosynthesis; thiamine phosphate from 4-amino-2-methyl-5-diphosphomethylpyrimidine and 4-methyl-5-(2-phosphoethyl)-thiazole: step 1/1. Functionally, condenses 4-methyl-5-(beta-hydroxyethyl)thiazole monophosphate (THZ-P) and 2-methyl-4-amino-5-hydroxymethyl pyrimidine pyrophosphate (HMP-PP) to form thiamine monophosphate (TMP). The protein is Thiamine-phosphate synthase of Dictyoglomus thermophilum (strain ATCC 35947 / DSM 3960 / H-6-12).